Consider the following 289-residue polypeptide: MKLIILEHYSQASEWAAKYIRNRIIQFNPGPEKYFTLGLPTGSTPLGCYKKLIEYYKNGDLSFKYVKTFNMDEYVGLPRDHPESYHSFMWNNFFKHIDIHPENTHILDGNAVDLQAECDAFEEKIKAAGGIELFVGGIGPDGHIAFNEPGSSLVSRTRVKTLAMDTILANARFFDGELTKVPTMALTVGVGTVMDAREVMILITGAHKAFALYKAIEEGVNHMWTVSAFQQHPRTVFVCDEDATLELKVKTVKYFKGLMLVHNKLVDPLYSIKEKETEKSQSSKKPYSD.

Lys64 carries the post-translational modification N6-acetyllysine. The active-site Proton acceptor; for enolization step is the Asp72. Asp141 acts as the For ring-opening step in catalysis. Catalysis depends on His143, which acts as the Proton acceptor; for ring-opening step. Glu148 acts as the For ring-opening step in catalysis. Thr161 carries the post-translational modification Phosphothreonine.

This sequence belongs to the glucosamine/galactosamine-6-phosphate isomerase family. As to quaternary structure, homohexamer.

It is found in the cytoplasm. The enzyme catalyses alpha-D-glucosamine 6-phosphate + H2O = beta-D-fructose 6-phosphate + NH4(+). The protein operates within nucleotide-sugar biosynthesis; UDP-N-acetyl-alpha-D-glucosamine biosynthesis; alpha-D-glucosamine 6-phosphate from D-fructose 6-phosphate: step 1/1. Allosterically activated by N-acetylglucosamine-6-phosphate (GlcNAc6P). Its function is as follows. Catalyzes the reversible conversion of alpha-D-glucosamine 6-phosphate (GlcN-6P) into beta-D-fructose 6-phosphate (Fru-6P) and ammonium ion, a regulatory reaction step in de novo uridine diphosphate-N-acetyl-alpha-D-glucosamine (UDP-GlcNAc) biosynthesis via hexosamine pathway. Deamination is coupled to aldo-keto isomerization mediating the metabolic flux from UDP-GlcNAc toward Fru-6P. At high ammonium level can drive amination and isomerization of Fru-6P toward hexosamines and UDP-GlcNAc synthesis. Has a role in fine tuning the metabolic fluctuations of cytosolic UDP-GlcNAc and their effects on hyaluronan synthesis that occur during tissue remodeling. Seems to trigger calcium oscillations in mammalian eggs. These oscillations serve as the essential trigger for egg activation and early development of the embryo. The sequence is that of Glucosamine-6-phosphate deaminase 1 from Homo sapiens (Human).